Consider the following 582-residue polypeptide: Putative transcriptional regulator HVO_1357 (582 aa).

Residues 19-129 (VVLVVDDDED…EVKETVEELL (111 aa)) form the Response regulatory domain. D67 bears the 4-aspartylphosphate mark. Residues 165–203 (LSDLRSRLEAVRAEHEAAIRNREAQLDRLNRTNELLRDV) are a coiled coil. Positions 517-569 (LTDRQRTVLETSLVSGYFEWPRGSTAEEVADSLGISPPTLHEHLRTAERKLIE) constitute an HTH bat-type domain.

Functionally, may be part of a signal-dependent gene regulation cascade that is relevant to swimming motility. May be involved in the transcription regulation of target genes. The protein is Putative transcriptional regulator HVO_1357 of Haloferax volcanii (strain ATCC 29605 / DSM 3757 / JCM 8879 / NBRC 14742 / NCIMB 2012 / VKM B-1768 / DS2) (Halobacterium volcanii).